Reading from the N-terminus, the 388-residue chain is MSSLKRVAIVVGEASGDILGAGLMAALKKRYPDCEFEGIGGPKMLALGFNSLYQMDRLAVMGFVEPLKRLPELLGIRKSLRQRYLTNPPDVFIGIDAPDFNLNLEVNLREAGVPVVHYVSPSVWAWRRGRLKKIAKAVDLMLTLFPFESSFFNEQNIPNLFVGHPLADTIPLENEKTGARERLGLSAENNERWVALLPGSRGGEVEHLCERFLLAAQQSFAGRPNLRIIIPAANDARHSQISEVLKRYSELPVTLLHGQSHDAMLAADAILIASGTATLEAMLLKRPMVIAYHMAAFSYWLLSKLVKSKFVGLPNLLADKELVPELLQHNATPSQLSAALNVYLDSEKTTQQLIEQFNAIHLQLRRDASETAAQGIVDMLAAKRDIAR.

The protein belongs to the LpxB family.

It carries out the reaction a lipid X + a UDP-2-N,3-O-bis[(3R)-3-hydroxyacyl]-alpha-D-glucosamine = a lipid A disaccharide + UDP + H(+). Its pathway is bacterial outer membrane biogenesis; LPS lipid A biosynthesis. Condensation of UDP-2,3-diacylglucosamine and 2,3-diacylglucosamine-1-phosphate to form lipid A disaccharide, a precursor of lipid A, a phosphorylated glycolipid that anchors the lipopolysaccharide to the outer membrane of the cell. In Saccharophagus degradans (strain 2-40 / ATCC 43961 / DSM 17024), this protein is Lipid-A-disaccharide synthase.